Consider the following 162-residue polypeptide: Selenoprotein F (162 aa).

Positions 1-28 are cleaved as a signal peptide; sequence MAAGQGGWLRPALGLRLLLATAFQAVSA. Position 93 (U93) is a non-standard amino acid, selenocysteine.

The protein belongs to the selenoprotein M/F family. In terms of assembly, forms a tight complex with UGGT1/UGCGL1. Interacts with UGGT2/UGCGL2. Interacts with RDH11. In terms of tissue distribution, highest levels in prostate, lower levels in brain, lung, thyroid gland, and large intestine.

It is found in the endoplasmic reticulum lumen. In terms of biological role, may be involved in redox reactions associated with the formation of disulfide bonds. May contribute to the quality control of protein folding in the endoplasmic reticulum. May regulate protein folding by enhancing the catalytic activity of UGGT1/UGCGL1 and UGGT2/UGCGL2. The protein is Selenoprotein F of Rattus norvegicus (Rat).